Consider the following 131-residue polypeptide: MREFKRTDRVADQLQQELAVLIQREIKDPRLGMVTVSSVKVSRDLGYADIYITLLGENDAARIDENLKVLRHARGFLRSQIANRIKLRHVPELRFHYDESVVRGQRLSSLIDEAVADDRRRHEDDDEDEVR.

It belongs to the RbfA family. As to quaternary structure, monomer. Binds 30S ribosomal subunits, but not 50S ribosomal subunits or 70S ribosomes.

Its subcellular location is the cytoplasm. One of several proteins that assist in the late maturation steps of the functional core of the 30S ribosomal subunit. Associates with free 30S ribosomal subunits (but not with 30S subunits that are part of 70S ribosomes or polysomes). Required for efficient processing of 16S rRNA. May interact with the 5'-terminal helix region of 16S rRNA. The sequence is that of Ribosome-binding factor A from Chromohalobacter salexigens (strain ATCC BAA-138 / DSM 3043 / CIP 106854 / NCIMB 13768 / 1H11).